A 26-amino-acid polypeptide reads, in one-letter code: PRKCH upstream open reading frame 2 (26 aa).

In terms of assembly, interacts with protein kinase C eta as well as other protein kinases including PRKCD, PRKCQ and PRKCE but not with PRKCG or PRKCZ; the interactions lead to inhibition of kinase activity.

Functionally, product of an upstream open reading frame (ORF) of PRKCH which regulates translation of the downstream protein kinase C eta (PKC-eta) ORF. Functions as a repressive element that maintains low basal levels of PKC-eta in growing cells but enhances its expression during stress conditions induced by amino acid starvation in a EIF2AK4/GCN2-dependent manner. In addition to its role in regulating PKC-eta translation, also inhibits the kinase activity of PKC-eta as well as other protein kinases including PRKCD, PRKCQ and PRKCE but not PRKCA, PRKCG or PRKCZ. The chain is PRKCH upstream open reading frame 2 from Homo sapiens (Human).